We begin with the raw amino-acid sequence, 289 residues long: Protein shisa-2 homolog (289 aa).

The N-terminal stretch at methionine 1–alanine 27 is a signal peptide. The Extracellular portion of the chain corresponds to serine 28–serine 104. Residues glycine 81–aspartate 102 form a disordered region. The helical transmembrane segment at alanine 105–leucine 125 threads the bilayer. Topologically, residues glycine 126–valine 289 are cytoplasmic. The interval proline 162–threonine 198 is disordered. The segment covering serine 163–alanine 191 has biased composition (low complexity).

It belongs to the shisa family.

The protein resides in the endoplasmic reticulum membrane. Functionally, plays an essential role in the maturation of presomitic mesoderm cells by individual attenuation of both FGF and WNT signaling. This is Protein shisa-2 homolog (SHISA2) from Bos taurus (Bovine).